A 728-amino-acid chain; its full sequence is Ribosome biogenesis protein bop1-A (728 aa).

Residues methionine 1–isoleucine 114 form a disordered region. Residues serine 55–glutamate 67 show a composition bias toward acidic residues. Residues asparagine 68–isoleucine 77 are compositionally biased toward basic and acidic residues. WD repeat units follow at residues glycine 393–serine 432, valine 434–cysteine 474, lysine 514–proline 556, lysine 559–lysine 597, threonine 600–lysine 639, histidine 643–glutamine 682, and histidine 698–threonine 728.

It belongs to the WD repeat BOP1/ERB1 family. In terms of assembly, component of the PeBoW complex, composed of bop1, pes1 and wdr12. The complex is held together by bop1, which interacts with pes1 via its N-terminal domain and with wdr12 via a high-affinity interaction between the seven-bladed beta-propeller domains of the 2 proteins. The PeBoW complex associates with the 66S pre-ribosome.

It localises to the nucleus. Its subcellular location is the nucleolus. The protein localises to the nucleoplasm. In terms of biological role, component of the PeBoW complex, which is required for maturation of 28S and 5.8S ribosomal RNAs and formation of the 60S ribosome. The chain is Ribosome biogenesis protein bop1-A (bop1-a) from Xenopus laevis (African clawed frog).